The sequence spans 393 residues: L-methionine gamma-lyase (393 aa).

Pyridoxal 5'-phosphate is bound by residues tyrosine 63–arginine 65 and glycine 93–methionine 94. Tyrosine 119 is an L-homocysteine binding site. Position 206–208 (serine 206–threonine 208) interacts with pyridoxal 5'-phosphate. Position 209 is an N6-(pyridoxal phosphate)lysine (lysine 209). Arginine 367 serves as a coordination point for L-homocysteine. An L-methionine-binding site is contributed by arginine 367.

Belongs to the trans-sulfuration enzymes family. L-methionine gamma-lyase subfamily. In terms of assembly, homotetramer. It depends on pyridoxal 5'-phosphate as a cofactor.

The enzyme catalyses L-methionine + H2O = methanethiol + 2-oxobutanoate + NH4(+). It catalyses the reaction L-homocysteine + H2O = 2-oxobutanoate + hydrogen sulfide + NH4(+) + H(+). Functionally, catalyzes the alpha,gamma-elimination of L-methionine to produce methanethiol, 2-oxobutanoate and ammonia. Is also able to catalyze the alpha,gamma-elimination of L-homocysteine. The polypeptide is L-methionine gamma-lyase (Brevibacterium sandarakinum).